Here is a 2335-residue protein sequence, read N- to C-terminus: Histone-lysine N-methyltransferase ATXR3 (2335 aa).

Disordered stretches follow at residues 30–142 (NESK…FKDE), 332–355 (STGN…SYAD), 371–556 (CSRS…SSSK), and 902–961 (DQVP…KTDT). Polar residues-rich tracts occupy residues 31-46 (ESKT…TSIA) and 53-62 (QPANKPSASS). The segment covering 65-84 (VKKKRIVKVIRKVVKRRPKQ) has biased composition (basic residues). Positions 67–74 (KKRIVKVI) match the Nuclear localization signal 1 motif. Residues 97–112 (PPSQVVQLPAESQLQI) show a composition bias toward polar residues. Composition is skewed to basic and acidic residues over residues 340–353 (HGAE…KHSY), 371–390 (CSRS…RLYR), and 430–452 (WSPH…RERS). Residues 461 to 475 (HARKRSPRDRRHHDY) are compositionally biased toward basic residues. 3 stretches are compositionally biased toward basic and acidic residues: residues 485–498 (SPHD…RRDY), 507–548 (QSDR…ESNG), and 910–921 (PRAKVRSKERCP). The Nuclear localization signal 2 motif lies at 527-534 (ERRDCQTG). Over residues 922–932 (SRPARPSPASS) the composition is skewed to low complexity. Residues 941 to 961 (SHSQSTASTGQDSQGLWKTDT) show a composition bias toward polar residues. Residues 1382–1389 (ARRSSAIL) carry the Nuclear localization signal 3 motif. The disordered stretch occupies residues 1532–1572 (NRKSFSSESDTSSELSDNGKSDNYSSASASESESDIRSEGR). The segment covering 1535 to 1547 (SFSSESDTSSELS) has biased composition (low complexity). One can recognise an SET domain in the interval 1765–1904 (KEIESRSDDK…YGEEITFDYN (140 aa)). A Zn(2+)-binding site is contributed by Cys1868. An S-adenosyl-L-methionine-binding site is contributed by Tyr1903. The Post-SET domain maps to 1914–1930 (EASVCLCGSQVCRGSYL). Cys1918, Cys1920, and Cys1925 together coordinate Zn(2+).

The protein belongs to the class V-like SAM-binding methyltransferase superfamily. Histone-lysine methyltransferase family. TRX/MLL subfamily. In terms of tissue distribution, expressed in roots, leaves, stems and inflorescences.

It localises to the nucleus. The enzyme catalyses L-lysyl(4)-[histone H3] + 3 S-adenosyl-L-methionine = N(6),N(6),N(6)-trimethyl-L-lysyl(4)-[histone H3] + 3 S-adenosyl-L-homocysteine + 3 H(+). In terms of biological role, histone methyltransferase specifically required for trimethylation of 'Lys-4' of histone H3 (H3K4me3) and is crucial for both sporophyte and gametophyte development. Function as a diurnal 'writer' to counteract the nocturne 'eraser' demethylase activity of JMJ14 thus orchestrating the circadian rhythm of histone modifications (e.g. H3K4me3) and modulating the rhythmic expression of diurnal target genes; this mechanism relies also on the circadian clock oscillators CCA1 and LHY. The sequence is that of Histone-lysine N-methyltransferase ATXR3 from Arabidopsis thaliana (Mouse-ear cress).